The following is a 452-amino-acid chain: GTPase Der (452 aa).

EngA-type G domains follow at residues 4–169 and 177–352; these read PVVA…PPQD and IQMA…EQHR. GTP-binding positions include 10-17, 57-61, 120-123, 183-190, 230-234, and 295-298; these read GRPNVGKS, DTGGL, NKCE, DTAGI, and NKWD. The region spanning 353-438 is the KH-like domain; the sequence is RRVTTAVVNE…PVRLFWRGKQ (86 aa).

Belongs to the TRAFAC class TrmE-Era-EngA-EngB-Septin-like GTPase superfamily. EngA (Der) GTPase family. As to quaternary structure, associates with the 50S ribosomal subunit.

Its function is as follows. GTPase that plays an essential role in the late steps of ribosome biogenesis. This Synechococcus sp. (strain RCC307) protein is GTPase Der.